The primary structure comprises 426 residues: Bifunctional protein GlmU (426 aa).

A pyrophosphorylase region spans residues 1-216 (MSEVDVVILA…WHDILGVNTQ (216 aa)). UDP-N-acetyl-alpha-D-glucosamine-binding positions include 9–12 (LAAG), Lys23, and Gln69. Residue Asp97 coordinates Mg(2+). The UDP-N-acetyl-alpha-D-glucosamine site is built by Gly132, Glu148, Asn163, and Asn214. Residue Asn214 participates in Mg(2+) binding. A linker region spans residues 217 to 237 (QQLAAVSKIARKRINDQIMAN). The tract at residues 238–426 (GVTMIDPLTT…AKHDQRDDQP (189 aa)) is N-acetyltransferase. Residues Arg286 and Lys304 each contribute to the UDP-N-acetyl-alpha-D-glucosamine site. Catalysis depends on His316, which acts as the Proton acceptor. Residues Tyr319 and Asn330 each contribute to the UDP-N-acetyl-alpha-D-glucosamine site. Acetyl-CoA is bound by residues Ala333, 339–340 (NY), Ser358, Ala376, and Arg393.

The protein in the N-terminal section; belongs to the N-acetylglucosamine-1-phosphate uridyltransferase family. This sequence in the C-terminal section; belongs to the transferase hexapeptide repeat family. As to quaternary structure, homotrimer. The cofactor is Mg(2+).

The protein localises to the cytoplasm. The enzyme catalyses alpha-D-glucosamine 1-phosphate + acetyl-CoA = N-acetyl-alpha-D-glucosamine 1-phosphate + CoA + H(+). The catalysed reaction is N-acetyl-alpha-D-glucosamine 1-phosphate + UTP + H(+) = UDP-N-acetyl-alpha-D-glucosamine + diphosphate. The protein operates within nucleotide-sugar biosynthesis; UDP-N-acetyl-alpha-D-glucosamine biosynthesis; N-acetyl-alpha-D-glucosamine 1-phosphate from alpha-D-glucosamine 6-phosphate (route II): step 2/2. It functions in the pathway nucleotide-sugar biosynthesis; UDP-N-acetyl-alpha-D-glucosamine biosynthesis; UDP-N-acetyl-alpha-D-glucosamine from N-acetyl-alpha-D-glucosamine 1-phosphate: step 1/1. It participates in bacterial outer membrane biogenesis; LPS lipid A biosynthesis. Functionally, catalyzes the last two sequential reactions in the de novo biosynthetic pathway for UDP-N-acetylglucosamine (UDP-GlcNAc). The C-terminal domain catalyzes the transfer of acetyl group from acetyl coenzyme A to glucosamine-1-phosphate (GlcN-1-P) to produce N-acetylglucosamine-1-phosphate (GlcNAc-1-P), which is converted into UDP-GlcNAc by the transfer of uridine 5-monophosphate (from uridine 5-triphosphate), a reaction catalyzed by the N-terminal domain. The sequence is that of Bifunctional protein GlmU from Oenococcus oeni (strain ATCC BAA-331 / PSU-1).